We begin with the raw amino-acid sequence, 255 residues long: Probable cyclic nucleotide phosphodiesterase syc0937_d (255 aa).

Fe cation is bound by residues Asp-19, His-21, Asp-59, Asn-89, His-157, His-196, and His-198. AMP-binding positions include His-21, Asp-59, and 89–90; that span reads NH. His-198 contacts AMP.

The protein belongs to the cyclic nucleotide phosphodiesterase class-III family. Requires Fe(2+) as cofactor.

This chain is Probable cyclic nucleotide phosphodiesterase syc0937_d, found in Synechococcus sp. (strain ATCC 27144 / PCC 6301 / SAUG 1402/1) (Anacystis nidulans).